A 462-amino-acid chain; its full sequence is Fasciclin-like arabinogalactan protein 18 (462 aa).

Residues 1 to 25 form the signal peptide; sequence MDRCIYGCSVITIFFSFFFLLNASA. N-linked (GlcNAc...) asparagine glycosylation is found at Asn32, Asn77, and Asn293. 2 FAS1 domains span residues 40 to 185 and 271 to 414; these read NSNS…ERLL and VKDF…DGVL.

It belongs to the fasciclin-like AGP family.

The protein localises to the secreted. Its function is as follows. May be a cell surface adhesion protein. The sequence is that of Fasciclin-like arabinogalactan protein 18 (FLA18) from Arabidopsis thaliana (Mouse-ear cress).